Here is a 304-residue protein sequence, read N- to C-terminus: ATP phosphoribosyltransferase (304 aa).

Belongs to the ATP phosphoribosyltransferase family. Long subfamily. It depends on Mg(2+) as a cofactor.

The protein resides in the cytoplasm. The catalysed reaction is 1-(5-phospho-beta-D-ribosyl)-ATP + diphosphate = 5-phospho-alpha-D-ribose 1-diphosphate + ATP. It participates in amino-acid biosynthesis; L-histidine biosynthesis; L-histidine from 5-phospho-alpha-D-ribose 1-diphosphate: step 1/9. Feedback inhibited by histidine. In terms of biological role, catalyzes the condensation of ATP and 5-phosphoribose 1-diphosphate to form N'-(5'-phosphoribosyl)-ATP (PR-ATP). Has a crucial role in the pathway because the rate of histidine biosynthesis seems to be controlled primarily by regulation of HisG enzymatic activity. In Xylella fastidiosa (strain 9a5c), this protein is ATP phosphoribosyltransferase.